A 696-amino-acid polypeptide reads, in one-letter code: Glycine--tRNA ligase beta subunit (696 aa).

Belongs to the class-II aminoacyl-tRNA synthetase family. In terms of assembly, tetramer of two alpha and two beta subunits.

The protein resides in the cytoplasm. The catalysed reaction is tRNA(Gly) + glycine + ATP = glycyl-tRNA(Gly) + AMP + diphosphate. The polypeptide is Glycine--tRNA ligase beta subunit (Nitratidesulfovibrio vulgaris (strain ATCC 29579 / DSM 644 / CCUG 34227 / NCIMB 8303 / VKM B-1760 / Hildenborough) (Desulfovibrio vulgaris)).